Here is a 92-residue protein sequence, read N- to C-terminus: Acylphosphatase (92 aa).

C5 and C49 are oxidised to a cystine. An Acylphosphatase-like domain is found at 5–92; it reads CIIAWVYGRV…SGELTDFRIR (88 aa). Catalysis depends on residues R20 and N38.

It belongs to the acylphosphatase family.

The enzyme catalyses an acyl phosphate + H2O = a carboxylate + phosphate + H(+). In Escherichia coli O6:H1 (strain CFT073 / ATCC 700928 / UPEC), this protein is Acylphosphatase.